The following is a 974-amino-acid chain: RING finger protein nhl-1 (974 aa).

A disordered region spans residues 1–29 (MSSSPQNEAEAREKMRELMSRPPSSRPAD). Positions 9–19 (AEAREKMRELM) are enriched in basic and acidic residues. The segment at 43–84 (CPICLDRYKQPKLLPCQHTFCYPCLESCADTLHRNLKCPECR) adopts an RING-type zinc-finger fold. 2 disordered regions span residues 360 to 395 (VKSDERASMRDREADRTSSRHSHRNPEPDESSIRYR) and 416 to 548 (SLLT…DFPV). A compositionally biased stretch (polar residues) spans 416–431 (SLLTTSVTADSSSRTS). The segment covering 437 to 446 (RVTRSVEPTK) has biased composition (basic and acidic residues). Residues 447 to 465 (SRPTSLIVPNTETPRTVSP) are compositionally biased toward polar residues. Residues 488–501 (APLPQLPIRKPPLP) show a composition bias toward pro residues. Residues 511-528 (LNEKVETIRRAHQQRQDA) are compositionally biased toward basic and acidic residues. Residues 529–538 (SRAASRAVSS) are compositionally biased toward low complexity. 6 NHL repeats span residues 699-742 (RAVF…FDKD), 746-788 (VRQF…FGLE), 792-835 (LFSF…FDKN), 839-883 (IAKF…FDPH), 887-930 (LFSF…FDAQ), and 934-974 (VSSF…IQIF).

Interacts with ubc-13.

In Caenorhabditis elegans, this protein is RING finger protein nhl-1.